We begin with the raw amino-acid sequence, 221 residues long: Thyrotroph embryonic factor (221 aa).

The interval 72 to 116 (ESASSSTASPPSSSTAVFQPSETVSSTESSLEKERETPSPIDPNC) is disordered. The segment covering 73 to 100 (SASSSTASPPSSSTAVFQPSETVSSTES) has biased composition (low complexity). Residues 173-221 (DEKYWTRRKKNNVAAKRSRDARRLKENQITIRAAFLEKENTALRTEVAD) form the bZIP domain. Residues 175–195 (KYWTRRKKNNVAAKRSRDARR) form a basic motif region. Residues 196–203 (LKENQITI) form a leucine-zipper region.

This sequence belongs to the bZIP family. PAR subfamily. Binds DNA as a homodimer or a heterodimer. Can form a heterodimer with DBP.

It localises to the nucleus. In terms of biological role, transcription factor that binds to and transactivates the TSHB promoter. Binds to a minimal DNA-binding sequence 5'-[TC][AG][AG]TTA[TC][AG]-3'. The polypeptide is Thyrotroph embryonic factor (TEF) (Phodopus sungorus (Striped hairy-footed hamster)).